Here is a 380-residue protein sequence, read N- to C-terminus: Mitogen-activated protein kinase mpkC (380 aa).

In terms of domain architecture, Protein kinase spans 20 to 300 (YVNLQPIGMG…AQDALRHPYL (281 aa)). ATP is bound by residues 26–34 (IGMGSFGLV) and lysine 49. Residue aspartate 141 is the Proton acceptor of the active site. Residue threonine 171 is modified to Phosphothreonine. A TXY motif is present at residues 171–173 (TGY). A Phosphotyrosine modification is found at tyrosine 173.

It belongs to the protein kinase superfamily. Ser/Thr protein kinase family. MAP kinase subfamily. HOG1 sub-subfamily. Requires Mg(2+) as cofactor. Dually phosphorylated on Thr-171 and Tyr-173, which activates the enzyme.

The enzyme catalyses L-seryl-[protein] + ATP = O-phospho-L-seryl-[protein] + ADP + H(+). It catalyses the reaction L-threonyl-[protein] + ATP = O-phospho-L-threonyl-[protein] + ADP + H(+). With respect to regulation, activated by tyrosine and threonine phosphorylation. In terms of biological role, mitogen-activated protein kinase required for growth on media where sorbitol or mannitol is the sole carbon source. In Aspergillus clavatus (strain ATCC 1007 / CBS 513.65 / DSM 816 / NCTC 3887 / NRRL 1 / QM 1276 / 107), this protein is Mitogen-activated protein kinase mpkC (mpkC).